The chain runs to 535 residues: Peptide chain release factor 3 (535 aa).

Residues 8–276 (ARRRTFAIIS…ALVEQAPPPG (269 aa)) enclose the tr-type G domain. GTP is bound by residues 17-24 (SHPDAGKT), 85-89 (DTPGH), and 139-142 (NKMD).

The protein belongs to the TRAFAC class translation factor GTPase superfamily. Classic translation factor GTPase family. PrfC subfamily.

It localises to the cytoplasm. Increases the formation of ribosomal termination complexes and stimulates activities of RF-1 and RF-2. It binds guanine nucleotides and has strong preference for UGA stop codons. It may interact directly with the ribosome. The stimulation of RF-1 and RF-2 is significantly reduced by GTP and GDP, but not by GMP. This Bordetella petrii (strain ATCC BAA-461 / DSM 12804 / CCUG 43448) protein is Peptide chain release factor 3.